The primary structure comprises 419 residues: UDP-N-acetylglucosamine 1-carboxyvinyltransferase (419 aa).

22 to 23 (KN) lines the phosphoenolpyruvate pocket. Arginine 92 contributes to the UDP-N-acetyl-alpha-D-glucosamine binding site. Catalysis depends on cysteine 116, which acts as the Proton donor. At cysteine 116 the chain carries 2-(S-cysteinyl)pyruvic acid O-phosphothioketal. Residues aspartate 306 and isoleucine 328 each coordinate UDP-N-acetyl-alpha-D-glucosamine.

Belongs to the EPSP synthase family. MurA subfamily.

It localises to the cytoplasm. The catalysed reaction is phosphoenolpyruvate + UDP-N-acetyl-alpha-D-glucosamine = UDP-N-acetyl-3-O-(1-carboxyvinyl)-alpha-D-glucosamine + phosphate. The protein operates within cell wall biogenesis; peptidoglycan biosynthesis. Its function is as follows. Cell wall formation. Adds enolpyruvyl to UDP-N-acetylglucosamine. The sequence is that of UDP-N-acetylglucosamine 1-carboxyvinyltransferase from Psychromonas ingrahamii (strain DSM 17664 / CCUG 51855 / 37).